The sequence spans 142 residues: Hemoglobin subunit alpha-2 (142 aa).

In terms of domain architecture, Globin spans V2 to R142. O2 is bound at residue H59. H88 lines the heme b pocket.

It belongs to the globin family. As to quaternary structure, heterotetramer of two alpha chains and two beta chains.

In terms of biological role, involved in oxygen transport from the lung to the various peripheral tissues. Its function is as follows. Hemopressin acts as an antagonist peptide of the cannabinoid receptor CNR1. Hemopressin-binding efficiently blocks cannabinoid receptor CNR1 and subsequent signaling. This chain is Hemoglobin subunit alpha-2 (HBA2), found in Capra hircus (Goat).